A 405-amino-acid polypeptide reads, in one-letter code: Putative aminotransferase AatC (405 aa).

At lysine 238 the chain carries N6-(pyridoxal phosphate)lysine.

The protein belongs to the class-I pyridoxal-phosphate-dependent aminotransferase family. Homodimer. It depends on pyridoxal 5'-phosphate as a cofactor.

It is found in the cytoplasm. The chain is Putative aminotransferase AatC (aatC) from Rhizobium meliloti (strain 1021) (Ensifer meliloti).